The following is a 149-amino-acid chain: MAHCLAAVSSFSPSAVRRRLSSQVANVVSSRSSVSFHSRQMSFVSISSRPSSLRFKICCAAMGEAQAKKETVDKVCMIVKKQLAVPDGTPVTAESKFSELGADSLDTVEIVMGLEEEFNITVDETSAQDIATVQDAANLIEKLVTEKTA.

The N-terminal 59 residues, 1-59, are a transit peptide targeting the chloroplast; that stretch reads MAHCLAAVSSFSPSAVRRRLSSQVANVVSSRSSVSFHSRQMSFVSISSRPSSLRFKICC. Residues 69-144 enclose the Carrier domain; it reads KETVDKVCMI…DAANLIEKLV (76 aa). The residue at position 104 (Ser-104) is an O-(pantetheine 4'-phosphoryl)serine.

Belongs to the acyl carrier protein (ACP) family. In terms of processing, 4'-phosphopantetheine is transferred from CoA to a specific serine of apo-ACP by acpS. This modification is essential for activity because fatty acids are bound in thioester linkage to the sulfhydryl of the prosthetic group.

Its subcellular location is the plastid. The protein localises to the chloroplast. It participates in lipid metabolism; fatty acid biosynthesis. Functionally, carrier of the growing fatty acid chain in fatty acid biosynthesis. The polypeptide is Acyl carrier protein 1, chloroplastic (ACL1.1) (Hordeum vulgare (Barley)).